The sequence spans 230 residues: Protein-L-isoaspartate O-methyltransferase (230 aa).

Ser68 is an active-site residue.

This sequence belongs to the methyltransferase superfamily. L-isoaspartyl/D-aspartyl protein methyltransferase family.

The protein resides in the cytoplasm. The enzyme catalyses [protein]-L-isoaspartate + S-adenosyl-L-methionine = [protein]-L-isoaspartate alpha-methyl ester + S-adenosyl-L-homocysteine. In terms of biological role, catalyzes the methyl esterification of L-isoaspartyl residues in peptides and proteins that result from spontaneous decomposition of normal L-aspartyl and L-asparaginyl residues. It plays a role in the repair and/or degradation of damaged proteins. The polypeptide is Protein-L-isoaspartate O-methyltransferase (Salinibacter ruber (strain DSM 13855 / M31)).